The primary structure comprises 580 residues: Arginine--tRNA ligase (580 aa).

The 'HIGH' region signature appears at 127–137 (PNLAKEMHVGH).

This sequence belongs to the class-I aminoacyl-tRNA synthetase family. As to quaternary structure, monomer.

It localises to the cytoplasm. It catalyses the reaction tRNA(Arg) + L-arginine + ATP = L-arginyl-tRNA(Arg) + AMP + diphosphate. The protein is Arginine--tRNA ligase of Idiomarina loihiensis (strain ATCC BAA-735 / DSM 15497 / L2-TR).